The sequence spans 137 residues: Protein ApaG (137 aa).

Positions 2–126 (PKYQFQVQVQ…FVLEAFSPGQ (125 aa)) constitute an ApaG domain.

The polypeptide is Protein ApaG (Acidovorax sp. (strain JS42)).